The primary structure comprises 415 residues: Metal tolerance protein 5 (415 aa).

The Cytoplasmic portion of the chain corresponds to Met1–Leu124. A helical membrane pass occupies residues Ala125–Val145. The Vacuolar portion of the chain corresponds to Arg146–Leu150. The helical transmembrane segment at Ala151 to Phe171 threads the bilayer. Topologically, residues Thr172–Gln192 are cytoplasmic. The chain crosses the membrane as a helical span at residues Pro193–Glu213. Topologically, residues Ser214–Glu232 are vacuolar. Residues Lys233–Cys253 traverse the membrane as a helical segment. The Cytoplasmic portion of the chain corresponds to Arg254–His268. Residues Phe269–Trp291 form a helical membrane-spanning segment. The Vacuolar portion of the chain corresponds to Ile292–Asp293. A helical transmembrane segment spans residues Pro294 to Leu313. The Cytoplasmic segment spans residues Glu314–Lys415.

This sequence belongs to the cation diffusion facilitator (CDF) transporter (TC 2.A.4) family. SLC30A subfamily.

It localises to the vacuole membrane. Its function is as follows. Involved in sequestration of excess metal in the cytoplasm into vacuoles to maintain metal homeostasis. The protein is Metal tolerance protein 5 (MTP5) of Oryza sativa subsp. japonica (Rice).